A 667-amino-acid polypeptide reads, in one-letter code: Long-chain fatty acid transport protein 3 (667 aa).

Residues A3–W23 traverse the membrane as a helical segment. The tract at residues T114–T144 is disordered. Positions R130–T144 are enriched in low complexity. ATP-binding positions include T272 to T276, H315, T412, D512, R527, and K619.

It belongs to the ATP-dependent AMP-binding enzyme family. Expressed at high levels in adrenal gland, testis and ovary. Expressed at lower levels in adult brain. Found in adrenal cortical cells, spermatocytes and interstitial cells of the testis, theca cells of the ovary, cerebral cortical neurons, and cerebellar Purkinje cells (at protein level).

The protein localises to the mitochondrion membrane. The catalysed reaction is a fatty acid(in) = a fatty acid(out). It catalyses the reaction a long-chain fatty acid + ATP + CoA = a long-chain fatty acyl-CoA + AMP + diphosphate. The enzyme catalyses (5Z,8Z,11Z,14Z)-eicosatetraenoate + ATP + CoA = (5Z,8Z,11Z,14Z)-eicosatetraenoyl-CoA + AMP + diphosphate. It carries out the reaction hexadecanoate + ATP + CoA = hexadecanoyl-CoA + AMP + diphosphate. The catalysed reaction is (9Z)-octadecenoate + ATP + CoA = (9Z)-octadecenoyl-CoA + AMP + diphosphate. It catalyses the reaction (9Z,12Z)-octadecadienoate + ATP + CoA = (9Z,12Z)-octadecadienoyl-CoA + AMP + diphosphate. The enzyme catalyses a very long-chain fatty acid + ATP + CoA = a very long-chain fatty acyl-CoA + AMP + diphosphate. It carries out the reaction tetracosanoate + ATP + CoA = tetracosanoyl-CoA + AMP + diphosphate. Mainly functions as an acyl-CoA ligase catalyzing the ATP-dependent formation of fatty acyl-CoA using LCFA and very-long-chain fatty acids (VLCFA) as substrates. Can mediate the levels of long-chain fatty acids (LCFA) in the cell by facilitating their transport across membranes. The chain is Long-chain fatty acid transport protein 3 (Slc27a3) from Mus musculus (Mouse).